We begin with the raw amino-acid sequence, 232 residues long: Small heat shock protein, chloroplastic (232 aa).

A compositionally biased stretch (polar residues) spans 1–25; sequence MAQSVSLSTIASPILSQKPGSSVKS. 2 disordered regions span residues 1-35 and 48-81; these read MAQSVSLSTIASPILSQKPGSSVKSTPPCMASFPL and RAQAGGDGDNKDNSVEVHRVNKDDQGTAVERKPR. The transit peptide at 1–46 directs the protein to the chloroplast; the sequence is MAQSVSLSTIASPILSQKPGSSVKSTPPCMASFPLRRQLPRLGLRN. Basic and acidic residues predominate over residues 55-78; it reads GDNKDNSVEVHRVNKDDQGTAVER. The sHSP domain occupies 124-232; it reads IGGGEIRVPW…ERTVIDVQIQ (109 aa).

It belongs to the small heat shock protein (HSP20) family.

Its subcellular location is the plastid. The protein resides in the chloroplast. This Pisum sativum (Garden pea) protein is Small heat shock protein, chloroplastic (HSP21).